A 469-amino-acid chain; its full sequence is Protein nucleotidyltransferase YdiU (469 aa).

Positions 80, 82, 83, 103, 115, 116, 166, and 173 each coordinate ATP. D243 acts as the Proton acceptor in catalysis. Residues N244 and D253 each contribute to the Mg(2+) site. D253 is a binding site for ATP.

It belongs to the SELO family. Mg(2+) is required as a cofactor. Mn(2+) serves as cofactor.

It carries out the reaction L-seryl-[protein] + ATP = 3-O-(5'-adenylyl)-L-seryl-[protein] + diphosphate. The enzyme catalyses L-threonyl-[protein] + ATP = 3-O-(5'-adenylyl)-L-threonyl-[protein] + diphosphate. It catalyses the reaction L-tyrosyl-[protein] + ATP = O-(5'-adenylyl)-L-tyrosyl-[protein] + diphosphate. The catalysed reaction is L-histidyl-[protein] + UTP = N(tele)-(5'-uridylyl)-L-histidyl-[protein] + diphosphate. It carries out the reaction L-seryl-[protein] + UTP = O-(5'-uridylyl)-L-seryl-[protein] + diphosphate. The enzyme catalyses L-tyrosyl-[protein] + UTP = O-(5'-uridylyl)-L-tyrosyl-[protein] + diphosphate. In terms of biological role, nucleotidyltransferase involved in the post-translational modification of proteins. It can catalyze the addition of adenosine monophosphate (AMP) or uridine monophosphate (UMP) to a protein, resulting in modifications known as AMPylation and UMPylation. In Pseudoalteromonas translucida (strain TAC 125), this protein is Protein nucleotidyltransferase YdiU.